Here is a 511-residue protein sequence, read N- to C-terminus: Probable eukaryotic translation initiation factor 4H (511 aa).

2 disordered regions span residues 25 to 63 and 154 to 511; these read SWAD…DRGS and TIRV…EVKI. Positions 39 to 51 are enriched in basic and acidic residues; sequence AREESGSGLKRGD. The RRM domain occupies 86–162; sequence FTAFIGNLSF…RTIRVNVAEA (77 aa). The segment covering 179–196 has biased composition (polar residues); it reads WRRSTPLASRESSSQPSR. 2 stretches are compositionally biased toward basic and acidic residues: residues 230-247 and 261-270; these read VRRD…RDPG and LAEKVDRDVP. The segment covering 285 to 318 has biased composition (polar residues); the sequence is LADTEQTWSRGTKLRTPTTTSRQSSADSTPSSGA. Residues 331–349 are compositionally biased toward low complexity; the sequence is TAGSPSATANATPAAPASG. Ser-334 carries the post-translational modification Phosphoserine. Basic and acidic residues-rich tracts occupy residues 360 to 388 and 394 to 419; these read AARE…EKQK and KPVE…DKVA. Residues 420–434 show a composition bias toward low complexity; sequence GKPTTAPATTTNTGA. Residues 438-448 show a composition bias toward basic and acidic residues; it reads GSADRAKKDEQ. Residues 451 to 467 are compositionally biased toward polar residues; that stretch reads EQVQPSRKSSQTGATSE. The segment covering 502–511 has biased composition (basic and acidic residues); sequence VTKGVEEVKI.

It localises to the cytoplasm. The protein resides in the P-body. Functionally, probable translation initiation factor. The polypeptide is Probable eukaryotic translation initiation factor 4H (Cryptococcus neoformans var. grubii serotype A (strain H99 / ATCC 208821 / CBS 10515 / FGSC 9487) (Filobasidiella neoformans var. grubii)).